Here is a 54-residue protein sequence, read N- to C-terminus: Large ribosomal subunit protein bL32c (54 aa).

This sequence belongs to the bacterial ribosomal protein bL32 family.

It localises to the plastid. It is found in the chloroplast. The polypeptide is Large ribosomal subunit protein bL32c (Gossypium barbadense (Sea Island cotton)).